Consider the following 573-residue polypeptide: Thiol:disulfide interchange protein DsbD (573 aa).

A signal peptide spans 1-20; sequence MLKRFFLLLSSLLLVCNVQA. The Periplasmic portion of the chain corresponds to 21–175; that stretch reads GLFNNKPQYL…AENLSNNYLS (155 aa). 2 disulfide bridges follow: Cys121/Cys126 and Cys191/Cys313. The chain crosses the membrane as a helical span at residues 176–196; it reads IFGFLLLGIGLAFTPCVLPML. Residues 197–227 lie on the Cytoplasmic side of the membrane; it reads PLLSAIVIGHKNRPNTSRALLLSFTYVQGMA. Residues 228–248 traverse the membrane as a helical segment; sequence LTYTLLGLTVAAIGLPFQVAL. The Periplasmic segment spans residues 249–251; the sequence is QSP. Residues 252–272 form a helical membrane-spanning segment; it reads AVLISLAVLFTLLAASMFGLF. The Cytoplasmic segment spans residues 273–292; it reads EIRLPNTWQQKLNALSQQQQ. Residues 293-313 traverse the membrane as a helical segment; the sequence is GGAVGNVFIMGIIAGLVASPC. The Periplasmic portion of the chain corresponds to 314–331; the sequence is TSAPLSGALLYVAQSGNL. The helical transmembrane segment at 332–352 threads the bilayer; it reads LIGGLALYLLALGMGLPLILI. Over 353–365 the chain is Cytoplasmic; sequence TVFGNQILPKSGE. A helical membrane pass occupies residues 366 to 386; it reads WLFKVKTAFGFVMLALPIFLI. At 387 to 393 the chain is on the periplasmic side; the sequence is SRILPSH. A helical transmembrane segment spans residues 394–414; the sequence is YEPFLWSTLALAFLGWLISSL. Topologically, residues 415-425 are cytoplasmic; it reads NYSTMLKQAVR. Residues 426–446 traverse the membrane as a helical segment; the sequence is ILLFIAFGLTAYPWANLVWQT. Residues 440 to 573 form the Thioredoxin domain; it reads ANLVWQTTSN…NQFLAWLNRL (134 aa). At 447–573 the chain is on the periplasmic side; that stretch reads TSNTAQPTTP…NQFLAWLNRL (127 aa). The cysteines at positions 490 and 493 are disulfide-linked.

The protein belongs to the thioredoxin family. DsbD subfamily.

Its subcellular location is the cell inner membrane. It catalyses the reaction [protein]-dithiol + NAD(+) = [protein]-disulfide + NADH + H(+). The enzyme catalyses [protein]-dithiol + NADP(+) = [protein]-disulfide + NADPH + H(+). Functionally, required to facilitate the formation of correct disulfide bonds in some periplasmic proteins and for the assembly of the periplasmic c-type cytochromes. Acts by transferring electrons from cytoplasmic thioredoxin to the periplasm. This transfer involves a cascade of disulfide bond formation and reduction steps. This chain is Thiol:disulfide interchange protein DsbD, found in Haemophilus ducreyi (strain 35000HP / ATCC 700724).